The primary structure comprises 357 residues: UPF0283 membrane protein HSM_0945 (357 aa).

3 helical membrane passes run 67–87, 96–116, and 213–233; these read LMAT…QWLV, IAFV…GTII, and AVES…MFFI.

It belongs to the UPF0283 family.

The protein localises to the cell inner membrane. This chain is UPF0283 membrane protein HSM_0945, found in Histophilus somni (strain 2336) (Haemophilus somnus).